A 987-amino-acid polypeptide reads, in one-letter code: Mediator of RNA polymerase II transcription subunit 24 (987 aa).

Short sequence motifs (LXXLL motif) lie at residues 128-132 (LHWLL), 344-348 (LTPLL), 446-450 (LDLLL), 555-559 (LVALL), 786-790 (LPGLL), and 855-859 (LMRLL). Residues S860 and S871 each carry the phosphoserine modification.

Belongs to the Mediator complex subunit 24 family. As to quaternary structure, component of the Mediator complex, which is composed of MED1, MED4, MED6, MED7, MED8, MED9, MED10, MED11, MED12, MED13, MED13L, MED14, MED15, MED16, MED17, MED18, MED19, MED20, MED21, MED22, MED23, MED24, MED25, MED26, MED27, MED29, MED30, MED31, CCNC, CDK8 and CDC2L6/CDK11. The MED12, MED13, CCNC and CDK8 subunits form a distinct module termed the CDK8 module. Mediator containing the CDK8 module is less active than Mediator lacking this module in supporting transcriptional activation. Individual preparations of the Mediator complex lacking one or more distinct subunits have been variously termed ARC, CRSP, DRIP, PC2, SMCC and TRAP. Interacts with AR.

It localises to the nucleus. Component of the Mediator complex, a coactivator involved in the regulated transcription of nearly all RNA polymerase II-dependent genes. Mediator functions as a bridge to convey information from gene-specific regulatory proteins to the basal RNA polymerase II transcription machinery. Mediator is recruited to promoters by direct interactions with regulatory proteins and serves as a scaffold for the assembly of a functional preinitiation complex with RNA polymerase II and the general transcription factors. The polypeptide is Mediator of RNA polymerase II transcription subunit 24 (Med24) (Rattus norvegicus (Rat)).